A 667-amino-acid chain; its full sequence is Protein OS-9 (667 aa).

A signal peptide spans 1–25; that stretch reads MAAETLLSSLLGLLLLGLLLPASLT. The 123-residue stretch at 108-230 folds into the MRH domain; that stretch reads APCLLKTKDW…TIRTPRLCPH (123 aa). A disulfide bond links Cys110 and Cys123. A mannooligosaccharide derivative-binding residues include Trp117, Trp118, and Gln130. N-linked (GlcNAc...) asparagine glycosylation is present at Asn177. Cystine bridges form between Cys181–Cys216 and Cys196–Cys228. 4 residues coordinate a mannooligosaccharide derivative: Asp182, Arg188, Glu212, and Tyr218. 5 disordered regions span residues 284-355, 372-452, 464-483, 504-540, and 633-667; these read WSET…NNVQ, LKGG…RDRL, LENI…LKKE, LEEK…PEHR, and AQKE…EFDF. Basic and acidic residues-rich tracts occupy residues 302-311 and 396-412; these read TKDDSKDSDF and PQRE…RQRE. Acidic residues predominate over residues 413–429; that stretch reads MEEEEDEDEDEDEDEDE. A compositionally biased stretch (basic and acidic residues) spans 430–452; it reads RQLLGEFEKELEGILLPSDRDRL. Residues 504–513 are compositionally biased toward basic and acidic residues; that stretch reads LEEKQSPELV. Residues 514–523 show a composition bias toward basic residues; sequence KKHKKKRVVP. Over residues 633–647 the composition is skewed to basic and acidic residues; that stretch reads AQKERQRQKELESNY.

This sequence belongs to the OS-9 family. Component of the HRD1 complex, which comprises at least SYNV1/HRD1, DERL1/2, FAM8A1, HERPUD1/HERP, OS9, SEL1L and UBE2J1. FAM8A1 is stabilized by interaction with SYNV1, which prevents its proteasomal degradation. OS9 and UBE2J1 recruitment to the complex may be mediated by SEL1L. Through this complex, may interact with ERLEC1 and HSPA5. Interacts (via C-terminus) with CPNE6 (via second C2 domain); this interaction occurs in a calcium-dependent manner in vitro. Interacts with CREB3. In terms of processing, intramolecular disulfide bonds. Post-translationally, isoform 1 and isoform 2 are N-glycosylated. In terms of tissue distribution, ubiquitously expressed. Found as well in all tumor cell lines analyzed, amplified in sarcomas. Highly expressed in osteosarcoma SJSA-1 and rhabdomyosarcoma Rh30 cell lines. Isoform 2 is the major isoform detected in all cell types examined.

Its subcellular location is the endoplasmic reticulum lumen. Functionally, lectin component of the HRD1 complex, which functions in endoplasmic reticulum (ER) quality control and ER-associated degradation (ERAD). Specifically recognizes and binds improperly folded glycoproteins as well as hyperglycosylated proteins, retain them in the ER, and transfers them to the ubiquitination machinery and promote their degradation. Possible targets include TRPV4 as well as hyperglycosylated HSP90B1. The chain is Protein OS-9 (OS9) from Homo sapiens (Human).